The following is an 837-amino-acid chain: Anaphase-promoting complex subunit 4 (837 aa).

2 stretches are compositionally biased toward low complexity: residues 59–81 (NDNN…NDNN) and 547–581 (SSSS…NNNN). Disordered stretches follow at residues 59–89 (NDNN…KSNK) and 547–588 (SSSS…QSGN).

This sequence belongs to the APC4 family. In terms of assembly, the APC/C is composed of at least 13 subunits that stay tightly associated throughout the cell cycle: anapc1, anapc2, anapc3, anapc4, anapc5, anapc6, anapc7, anapc8, anapc10, anapc11, cdc20, cdc26 and cdh1.

It localises to the nucleus. The protein operates within protein modification; protein ubiquitination. Functionally, component of the anaphase promoting complex/cyclosome (APC/C), a cell cycle-regulated E3 ubiquitin-protein ligase complex that controls progression through mitosis and the G1 phase of the cell cycle. The chain is Anaphase-promoting complex subunit 4 (anapc4) from Dictyostelium discoideum (Social amoeba).